The following is a 249-amino-acid chain: Triosephosphate isomerase (249 aa).

A substrate-binding site is contributed by 9-11 (NWK). Catalysis depends on H94, which acts as the Electrophile. E166 functions as the Proton acceptor in the catalytic mechanism. Residues G172, S211, and 232–233 (GG) contribute to the substrate site.

It belongs to the triosephosphate isomerase family. As to quaternary structure, homodimer.

The protein resides in the cytoplasm. The enzyme catalyses D-glyceraldehyde 3-phosphate = dihydroxyacetone phosphate. Its pathway is carbohydrate biosynthesis; gluconeogenesis. The protein operates within carbohydrate degradation; glycolysis; D-glyceraldehyde 3-phosphate from glycerone phosphate: step 1/1. In terms of biological role, involved in the gluconeogenesis. Catalyzes stereospecifically the conversion of dihydroxyacetone phosphate (DHAP) to D-glyceraldehyde-3-phosphate (G3P). The protein is Triosephosphate isomerase of Chromohalobacter salexigens (strain ATCC BAA-138 / DSM 3043 / CIP 106854 / NCIMB 13768 / 1H11).